Consider the following 618-residue polypeptide: UvrABC system protein C (618 aa).

One can recognise a GIY-YIG domain in the interval 13 to 92 (DKPGVYLMKN…IKKYRPKYNI (80 aa)). A UVR domain is found at 204–239 (LDIVENFKLNMEKAAGNLEFEKAAMLRDKINIIEKI).

It belongs to the UvrC family. As to quaternary structure, interacts with UvrB in an incision complex.

It is found in the cytoplasm. Functionally, the UvrABC repair system catalyzes the recognition and processing of DNA lesions. UvrC both incises the 5' and 3' sides of the lesion. The N-terminal half is responsible for the 3' incision and the C-terminal half is responsible for the 5' incision. This chain is UvrABC system protein C, found in Clostridium botulinum (strain 657 / Type Ba4).